The primary structure comprises 328 residues: 2,4-dinitroanisole O-demethylase subunit alpha (328 aa).

Positions M1–S9 are excised as a propeptide. H101, H103, D105, H168, H225, and C247 together coordinate Zn(2+).

This sequence belongs to the metallo-beta-lactamase superfamily. As to quaternary structure, part of the complex DnhAB composed of the 2,4-dinitroanisole O-demethylase alpha (DnhA) and beta (DnhB) subunits. It depends on Zn(2+) as a cofactor.

The catalysed reaction is 2,4-dinitroanisole + H2O = 2,4-dinitrophenol + methanol + H(+). Its function is as follows. Involved in the degradation of 2,4-dinitroanisole (DNAN), an insensitive munition ingredient used in explosive formulations as a replacement for 2,4,6-trinitrotoluene (TNT). Catalyzes the removal of the methyl group from 2,4-dinitroanisole (DNAN) to yield 2,4-dinitrophenol (2,4-DNP) and methanol. The chain is 2,4-dinitroanisole O-demethylase subunit alpha from Nocardioides sp. (strain JS1661).